The following is a 71-amino-acid chain: Small ribosomal subunit protein bS21 (71 aa).

Belongs to the bacterial ribosomal protein bS21 family.

The polypeptide is Small ribosomal subunit protein bS21 (Shewanella sediminis (strain HAW-EB3)).